The sequence spans 131 residues: Ribosome-binding factor A (131 aa).

This sequence belongs to the RbfA family. Monomer. Binds 30S ribosomal subunits, but not 50S ribosomal subunits or 70S ribosomes.

The protein resides in the cytoplasm. Functionally, one of several proteins that assist in the late maturation steps of the functional core of the 30S ribosomal subunit. Associates with free 30S ribosomal subunits (but not with 30S subunits that are part of 70S ribosomes or polysomes). Required for efficient processing of 16S rRNA. May interact with the 5'-terminal helix region of 16S rRNA. The protein is Ribosome-binding factor A of Ruegeria sp. (strain TM1040) (Silicibacter sp.).